A 634-amino-acid chain; its full sequence is tRNA uridine 5-carboxymethylaminomethyl modification enzyme MnmG (634 aa).

14–19 (GGGHAG) provides a ligand contact to FAD. Position 279–293 (279–293 (GPRYCPSIEDKVVRF)) interacts with NAD(+).

Belongs to the MnmG family. In terms of assembly, homodimer. Heterotetramer of two MnmE and two MnmG subunits. FAD is required as a cofactor.

The protein resides in the cytoplasm. Functionally, NAD-binding protein involved in the addition of a carboxymethylaminomethyl (cmnm) group at the wobble position (U34) of certain tRNAs, forming tRNA-cmnm(5)s(2)U34. The protein is tRNA uridine 5-carboxymethylaminomethyl modification enzyme MnmG of Xanthomonas oryzae pv. oryzae (strain KACC10331 / KXO85).